Here is a 166-residue protein sequence, read N- to C-terminus: MILEPDTVIDLFLQPGGFYWGKGNIRIRTLLGSCVSICFWHPSLLYGGMAHVMLPFRPSSIHSDDSLNAKYAEDAFQLFFEKLEGFKKQYQIKLFGGASMFSTEEEKLLELKSVRDIGMKNILSIKEHLIRNQLLISSEDLGGFSHRRIFFSLWDGEIYVERPEHT.

This sequence belongs to the CheD family.

The catalysed reaction is L-glutaminyl-[protein] + H2O = L-glutamyl-[protein] + NH4(+). Its function is as follows. Probably deamidates glutamine residues to glutamate on methyl-accepting chemotaxis receptors (MCPs), playing an important role in chemotaxis. This Leptospira interrogans serogroup Icterohaemorrhagiae serovar copenhageni (strain Fiocruz L1-130) protein is Probable chemoreceptor glutamine deamidase CheD 1.